A 698-amino-acid polypeptide reads, in one-letter code: Polyribonucleotide nucleotidyltransferase (698 aa).

Mg(2+) contacts are provided by Asp490 and Asp496. The 60-residue stretch at 557-616 folds into the KH domain; the sequence is PKVVTMTIKPDKIRDVIGPGGKKINEIIDETGVKLDIEQDGTIFIGAVDQAMINRAREII. In terms of domain architecture, S1 motif spans 626 to 694; sequence GQTYQATVKR…KQGRVNASHR (69 aa).

The protein belongs to the polyribonucleotide nucleotidyltransferase family. Mg(2+) serves as cofactor.

It localises to the cytoplasm. The enzyme catalyses RNA(n+1) + phosphate = RNA(n) + a ribonucleoside 5'-diphosphate. In terms of biological role, involved in mRNA degradation. Catalyzes the phosphorolysis of single-stranded polyribonucleotides processively in the 3'- to 5'-direction. The sequence is that of Polyribonucleotide nucleotidyltransferase from Staphylococcus aureus (strain Mu3 / ATCC 700698).